The sequence spans 593 residues: Gamma-humulene synthase (593 aa).

The span at 1–26 shows a compositional bias: polar residues; sequence MAQISESVSPSTDLKSTESSITSNRH. A disordered region spans residues 1 to 34; sequence MAQISESVSPSTDLKSTESSITSNRHGNMWEDDR. Positions 343, 347, 488, and 496 each coordinate Mg(2+). Residues 343–347 carry the DDXXD motif motif; the sequence is DDLYD.

This sequence belongs to the terpene synthase family. Tpsd subfamily. It depends on Mg(2+) as a cofactor. K(+) is required as a cofactor.

Its subcellular location is the cytoplasm. It carries out the reaction (2E,6E)-farnesyl diphosphate = gamma-humulene + diphosphate. The enzyme catalyses (2E,6E)-farnesyl diphosphate = sibirene + diphosphate. The catalysed reaction is (2E,6E)-farnesyl diphosphate = longifolene + diphosphate. It catalyses the reaction (2E,6E)-farnesyl diphosphate = beta-himachalene + diphosphate. It carries out the reaction (2E,6E)-farnesyl diphosphate = gamma-himachalene + diphosphate. The enzyme catalyses (2E,6E)-farnesyl diphosphate = alpha-himachalene + diphosphate. It functions in the pathway terpene metabolism; oleoresin biosynthesis. Its function is as follows. Involved in defensive oleoresin formation in conifers in response to insect attack or other injury. Involved in 52 sesquiterpene (C15) olefins biosynthesis. This is Gamma-humulene synthase (ag5) from Abies grandis (Grand fir).